Here is a 243-residue protein sequence, read N- to C-terminus: MKMINLDSKKLASFYVACELFKQIQQYPHTKLGLATGGTMTDVYHYLVNLLTKNKADVSQVETFNLDEYVGLKASHQQSYHTYMNKVLFEQYPHFAKNHIHIPDGYSENLEAEAERYNKLLDERGPIDIQILGIGENGHIGFNEPGTDFNSETHVVNLTESTIKANSRYFDNEADVPRQAVSMGLASILKAKRIILLAFGPKKKEAISKLLNEQVTEDVPATILHTHPNVEVYVDDDAAPDCL.

The active-site Proton acceptor; for enolization step is Asp-67. Asn-137 (for ring-opening step) is an active-site residue. His-139 functions as the Proton acceptor; for ring-opening step in the catalytic mechanism. Catalysis depends on Glu-144, which acts as the For ring-opening step.

This sequence belongs to the glucosamine/galactosamine-6-phosphate isomerase family. NagB subfamily.

It catalyses the reaction alpha-D-glucosamine 6-phosphate + H2O = beta-D-fructose 6-phosphate + NH4(+). The protein operates within amino-sugar metabolism; N-acetylneuraminate degradation; D-fructose 6-phosphate from N-acetylneuraminate: step 5/5. Its function is as follows. Catalyzes the reversible isomerization-deamination of glucosamine 6-phosphate (GlcN6P) to form fructose 6-phosphate (Fru6P) and ammonium ion. This chain is Glucosamine-6-phosphate deaminase, found in Staphylococcus epidermidis (strain ATCC 35984 / DSM 28319 / BCRC 17069 / CCUG 31568 / BM 3577 / RP62A).